The chain runs to 160 residues: Glucagon-1 (160 aa).

Positions 1-22 (MSDPGFLAAPVLLLLLVSLASA) are cleaved as a signal peptide. 3 consecutive propeptides follow at residues 23–40 (SLEQ…RPLS), 74–79 (GGSELQ), and 116–127 (DGGDHLAENSED). Residues 112 to 132 (KSRRDGGDHLAENSEDKRHAE) form a disordered region.

It belongs to the glucagon family.

It is found in the secreted. Its function is as follows. Promotes hydrolysis of glycogen and lipids, and raises the blood sugar level. This chain is Glucagon-1 (gcg1), found in Petromyzon marinus (Sea lamprey).